Here is a 142-residue protein sequence, read N- to C-terminus: Large ribosomal subunit protein uL11 (142 aa).

Belongs to the universal ribosomal protein uL11 family. Part of the ribosomal stalk of the 50S ribosomal subunit. Interacts with L10 and the large rRNA to form the base of the stalk. L10 forms an elongated spine to which L12 dimers bind in a sequential fashion forming a multimeric L10(L12)X complex. One or more lysine residues are methylated.

Functionally, forms part of the ribosomal stalk which helps the ribosome interact with GTP-bound translation factors. The polypeptide is Large ribosomal subunit protein uL11 (Mycobacterium ulcerans (strain Agy99)).